The sequence spans 554 residues: Outer envelope protein 61 (554 aa).

Residues 1 to 525 (MFNGLMDPEM…GMEKAKKAKK (525 aa)) lie on the Cytoplasmic side of the membrane. TPR repeat units lie at residues 103–136 (AQML…LKEI) and 180–213 (VKAL…SPED). Disordered stretches follow at residues 245-269 (TEEN…AQGV) and 395-439 (APAS…PSAP). A compositionally biased stretch (basic and acidic residues) spans 254–263 (ENKKPSKEAN). Over residues 412 to 423 (SLGASGSSSGNS) the composition is skewed to low complexity. A helical membrane pass occupies residues 526 to 546 (WLFGKGGLIFAILMLVLAMVL). At 547-554 (HRLGYIGN) the chain is on the lumenal side.

As to quaternary structure, interacts (via TPR region) with HSP70-1, but not with HSP90-2. Interacts with ERDJ2A and ERDJ2B. In the ER membrane, associates with ERDJ2 in membrane complexes of 140 and 200 kDa and specifically interacts with the HSP70 and HSP90 chaperones via its TPR domain. As to expression, ubiquitous. Highest expression in leaves and lowest in roots.

The protein localises to the endoplasmic reticulum membrane. It is found in the plastid. Its subcellular location is the chloroplast outer membrane. Functionally, plays a role in protein import into the endoplasmic reticulum (ER). May function as chaperone docking protein during post-translational protein translocation into the ER. Chaperone receptor mediating Hsp70-dependent protein targeting to chloroplasts. Interacts specifically with some chloroplast precursors, but not with mitochondrial precursors. Able to select precursors for delivery to the chloroplast translocase independently of Hsp70. The protein is Outer envelope protein 61 (OEP61) of Arabidopsis thaliana (Mouse-ear cress).